The following is a 263-amino-acid chain: Phosphate import ATP-binding protein PstB (263 aa).

One can recognise an ABC transporter domain in the interval 17-258 (IDVRDLNFYY…PRRKETEDYI (242 aa)). Residue 49-56 (GPSGCGKS) coordinates ATP.

It belongs to the ABC transporter superfamily. Phosphate importer (TC 3.A.1.7) family. The complex is composed of two ATP-binding proteins (PstB), two transmembrane proteins (PstC and PstA) and a solute-binding protein (PstS).

The protein resides in the cell inner membrane. The enzyme catalyses phosphate(out) + ATP + H2O = ADP + 2 phosphate(in) + H(+). Functionally, part of the ABC transporter complex PstSACB involved in phosphate import. Responsible for energy coupling to the transport system. In Ralstonia nicotianae (strain ATCC BAA-1114 / GMI1000) (Ralstonia solanacearum), this protein is Phosphate import ATP-binding protein PstB.